The sequence spans 410 residues: UBX domain-containing protein 3 (410 aa).

2 disordered regions span residues 46–139 (EEDH…PDPK) and 154–212 (TISP…EKPL). A compositionally biased stretch (low complexity) spans 65–85 (GSSSGISGGDQQPPRPLQRQQ). Residues 86-97 (NTQGQGMKSGTA) are compositionally biased toward polar residues. 3 positions are modified to phosphoserine: Ser-156, Ser-167, and Ser-186. The span at 163 to 174 (SGPSSLASSWAS) shows a compositional bias: low complexity. Residues 183–196 (NEASGSTTPVTQSG) show a composition bias toward polar residues. Residue Thr-190 is modified to Phosphothreonine. Positions 211-276 (PLRRTLYFWR…VQHRMDEDYV (66 aa)) constitute an SEP domain. In terms of domain architecture, UBX spans 334 to 410 (ENKPTTRIQV…KNASLVQKSL (77 aa)).

In terms of assembly, interacts with cdc48.

Involved in CDC48-dependent protein degradation through the ubiquitin/proteasome pathway. Involved in delivery of substrates to the 26S proteasome. Also required for membrane fusion and sporulation. The chain is UBX domain-containing protein 3 (ubx3) from Schizosaccharomyces pombe (strain 972 / ATCC 24843) (Fission yeast).